The chain runs to 165 residues: Small ribosomal subunit protein bS16 (165 aa).

The tract at residues 110 to 165 is disordered; that stretch reads LSEANNGPTAEAITEKKKKAREDKEAKEAAEKAAAEKAAAAESEEAPAEEAAAEEA. The segment covering 129–144 has biased composition (basic and acidic residues); it reads AREDKEAKEAAEKAAA. Residues 151 to 165 show a composition bias toward acidic residues; that stretch reads ESEEAPAEEAAAEEA.

Belongs to the bacterial ribosomal protein bS16 family.

This chain is Small ribosomal subunit protein bS16, found in Corynebacterium glutamicum (strain R).